The primary structure comprises 443 residues: Xaa-Pro dipeptidase (443 aa).

Residues Asp-246, Asp-257, His-339, Glu-384, and Glu-423 each coordinate Mn(2+).

The protein belongs to the peptidase M24B family. Bacterial-type prolidase subfamily. Mn(2+) is required as a cofactor.

It catalyses the reaction Xaa-L-Pro dipeptide + H2O = an L-alpha-amino acid + L-proline. Its function is as follows. Splits dipeptides with a prolyl residue in the C-terminal position. In Pectobacterium atrosepticum (strain SCRI 1043 / ATCC BAA-672) (Erwinia carotovora subsp. atroseptica), this protein is Xaa-Pro dipeptidase.